Reading from the N-terminus, the 430-residue chain is N-lysine methyltransferase SMYD2-A (430 aa).

The SET domain occupies Glu-5 to Ile-239. Lys-15 to Arg-17 serves as a coordination point for S-adenosyl-L-methionine. The Zn(2+) site is built by Cys-50, Cys-53, Cys-63, Cys-66, Cys-72, Cys-76, His-84, and Cys-88. The MYND-type zinc finger occupies Cys-50–Cys-88. S-adenosyl-L-methionine contacts are provided by residues His-135, Asn-204 to His-205, and Tyr-256 to Phe-258.

The protein belongs to the class V-like SAM-binding methyltransferase superfamily.

The protein localises to the cytoplasm. The protein resides in the cytosol. It is found in the nucleus. It catalyses the reaction L-lysyl(4)-[histone H3] + 3 S-adenosyl-L-methionine = N(6),N(6),N(6)-trimethyl-L-lysyl(4)-[histone H3] + 3 S-adenosyl-L-homocysteine + 3 H(+). The catalysed reaction is L-lysyl-[protein] + S-adenosyl-L-methionine = N(6)-methyl-L-lysyl-[protein] + S-adenosyl-L-homocysteine + H(+). Protein-lysine N-methyltransferase that methylates both histones and non-histone proteins, including p53/TP53 and RB1. Specifically trimethylates histone H3 'Lys-4' (H3K4me3) in vivo. The activity requires interaction with HSP90alpha. Shows even higher methyltransferase activity on p53/TP53. Monomethylates 'Lys-370' of p53/TP53, leading to decreased DNA-binding activity and subsequent transcriptional regulation activity of p53/TP53. Monomethylates RB1 at 'Lys-860'. This chain is N-lysine methyltransferase SMYD2-A (smyd2-a), found in Xenopus laevis (African clawed frog).